A 188-amino-acid chain; its full sequence is Auxin-induced protein 22C (188 aa).

Residues 13-17 carry the EAR-like (transcriptional repression) motif; the sequence is LRLGL. Residues 16–57 form a disordered region; sequence GLPGAGGENNTDKDKNKNKKRVFSDIEGENSSSEEDGKKETK. The region spanning 79-167 is the PB1 domain; the sequence is KLYVKVSMDG…KRLRIMKRSD (89 aa).

The protein belongs to the Aux/IAA family. In terms of assembly, homodimers and heterodimers.

The protein localises to the nucleus. Its function is as follows. Aux/IAA proteins are short-lived transcriptional factors that function as repressors of early auxin response genes at low auxin concentrations. Repression is thought to result from the interaction with auxin response factors (ARFs), proteins that bind to the auxin-responsive promoter element (AuxRE). Formation of heterodimers with ARF proteins may alter their ability to modulate early auxin response genes expression. The polypeptide is Auxin-induced protein 22C (AUX22C) (Vigna radiata var. radiata (Mung bean)).